We begin with the raw amino-acid sequence, 335 residues long: Pyridoxal 5'-phosphate synthase subunit PdxS (335 aa).

Asp-59 is a binding site for D-ribose 5-phosphate. Catalysis depends on Lys-116, which acts as the Schiff-base intermediate with D-ribose 5-phosphate. Gly-188 is a D-ribose 5-phosphate binding site. Lys-200 lines the D-glyceraldehyde 3-phosphate pocket. Residues Gly-253 and 274-275 (GS) each bind D-ribose 5-phosphate.

Belongs to the PdxS/SNZ family. As to quaternary structure, in the presence of PdxT, forms a dodecamer of heterodimers.

The catalysed reaction is aldehydo-D-ribose 5-phosphate + D-glyceraldehyde 3-phosphate + L-glutamine = pyridoxal 5'-phosphate + L-glutamate + phosphate + 3 H2O + H(+). It participates in cofactor biosynthesis; pyridoxal 5'-phosphate biosynthesis. Its function is as follows. Catalyzes the formation of pyridoxal 5'-phosphate from ribose 5-phosphate (RBP), glyceraldehyde 3-phosphate (G3P) and ammonia. The ammonia is provided by the PdxT subunit. Can also use ribulose 5-phosphate and dihydroxyacetone phosphate as substrates, resulting from enzyme-catalyzed isomerization of RBP and G3P, respectively. This is Pyridoxal 5'-phosphate synthase subunit PdxS from Desulfurococcus amylolyticus (strain DSM 18924 / JCM 16383 / VKM B-2413 / 1221n) (Desulfurococcus kamchatkensis).